Here is a 339-residue protein sequence, read N- to C-terminus: Glycerol-3-phosphate dehydrogenase [NAD(P)+] (339 aa).

Serine 15, tyrosine 16, histidine 36, and lysine 110 together coordinate NADPH. Sn-glycerol 3-phosphate contacts are provided by lysine 110, glycine 139, and threonine 141. Residue alanine 143 coordinates NADPH. Sn-glycerol 3-phosphate is bound by residues lysine 195, aspartate 248, serine 258, arginine 259, and asparagine 260. Catalysis depends on lysine 195, which acts as the Proton acceptor. Arginine 259 is an NADPH binding site. Valine 283 and glutamate 285 together coordinate NADPH.

This sequence belongs to the NAD-dependent glycerol-3-phosphate dehydrogenase family.

The protein resides in the cytoplasm. It catalyses the reaction sn-glycerol 3-phosphate + NAD(+) = dihydroxyacetone phosphate + NADH + H(+). The catalysed reaction is sn-glycerol 3-phosphate + NADP(+) = dihydroxyacetone phosphate + NADPH + H(+). The protein operates within membrane lipid metabolism; glycerophospholipid metabolism. Catalyzes the reduction of the glycolytic intermediate dihydroxyacetone phosphate (DHAP) to sn-glycerol 3-phosphate (G3P), the key precursor for phospholipid synthesis. The protein is Glycerol-3-phosphate dehydrogenase [NAD(P)+] of Shigella flexneri serotype 5b (strain 8401).